The primary structure comprises 250 residues: 5-oxoprolinase subunit A (250 aa).

Belongs to the LamB/PxpA family. As to quaternary structure, forms a complex composed of PxpA, PxpB and PxpC.

It catalyses the reaction 5-oxo-L-proline + ATP + 2 H2O = L-glutamate + ADP + phosphate + H(+). Catalyzes the cleavage of 5-oxoproline to form L-glutamate coupled to the hydrolysis of ATP to ADP and inorganic phosphate. This chain is 5-oxoprolinase subunit A, found in Chromohalobacter salexigens (strain ATCC BAA-138 / DSM 3043 / CIP 106854 / NCIMB 13768 / 1H11).